Here is a 69-residue protein sequence, read N- to C-terminus: Conotoxin Fr3.1 (69 aa).

The N-terminal stretch at 1-20 is a signal peptide; the sequence is MLKTGVLLLIFLVLFPLATL. The propeptide occupies 21–51; sequence QDADQPVERNVENKQDLNLDKRRGMKLLAQR. Gln52 is modified (pyrrolidone carboxylic acid). Position 54 is a 4-carboxyglutamate (Glu54). A 4-hydroxyproline modification is found at Pro58.

This sequence belongs to the conotoxin M superfamily. As to expression, expressed by the venom duct.

The protein localises to the secreted. Its function is as follows. Probable toxin. The polypeptide is Conotoxin Fr3.1 (Conus frigidus (Frigid cone)).